The sequence spans 301 residues: MFSHLPFDCVLLLLLLLLTRSSEVEYRAEVGQNAYLPCFYTPAAPGNLVPVCWGKGACPVFECGNVVLRTDERDVNYWTSRYWLNGDFRKGDVSLTIENVTLADSGIYCCRIQIPGIMNDEKFNLKLVIKPAKVTPAPTRQRDFTAAFPRMLTTRGHGPAETQTLGSLPDINLTQISTLANELRDSRLANDLRDSGATIRIGIYIGAGICAGLALALIFGALIFKWYSHSKEKIQNLSLISLANLPPSGLANAVAEGIRSEENIYTIEENVYEVEEPNEYYCYVSSRQQPSQPLGCRFAMP.

An N-terminal signal peptide occupies residues 1-21 (MFSHLPFDCVLLLLLLLLTRS). Residues 22-124 (SEVEYRAEVG…PGIMNDEKFN (103 aa)) form the Ig-like V-type domain. Topologically, residues 22–202 (SEVEYRAEVG…RDSGATIRIG (181 aa)) are extracellular. 3 disulfide bridges follow: Cys-38–Cys-110, Cys-52–Cys-63, and Cys-58–Cys-109. Arg-111 provides a ligand contact to a 1,2-diacyl-sn-glycero-3-phospho-L-serine. Gly-116 is a Ca(2+) binding site. Met-118 is a binding site for a 1,2-diacyl-sn-glycero-3-phospho-L-serine. Asn-119 serves as a coordination point for Ca(2+). O-linked (GalNAc...) threonine glycosylation is present at Thr-145. N-linked (GlcNAc...) asparagine glycosylation occurs at Asn-172. The helical transmembrane segment at 203-223 (IYIGAGICAGLALALIFGALI) threads the bilayer. Over 224–301 (FKWYSHSKEK…QPLGCRFAMP (78 aa)) the chain is Cytoplasmic. Tyr-265 is subject to Phosphotyrosine; by ITK. The S-palmitoyl cysteine moiety is linked to residue Cys-296.

Belongs to the immunoglobulin superfamily. TIM family. As to quaternary structure, interacts with HMGB1; impairs HMGB1 binding to B-DNA and likely HMGB1-mediated innate immune response. Interacts with BAG6. Interacts (phosphorylated) with PIK3R1 and PIK3R2. Interacts (not dependent on its phosphorylation status) with FYN. Interacts (in basal state T-cells) with VAV1; AKT1/2, LCP2, ZAP70, SYK, PIK3R1, FYN, SH3BP2 and SH2D2A. Interacts (in activated T-cells) with LCK and PLCG. Interacts with ILF3; this interaction promotes ILF3 ubiquitination and degradation. O-glycosylated with core 1 or possibly core 8 glycans. In terms of processing, phosphorylated on tyrosine residues; modestly increased after TCR/CD28 stimulation. Can be phosphorylated in the cytoplasmic domain by FYN. Phosphorylation at Tyr-265 is increased by stimulation with ligand LGALS9. Post-translationally, palmitoylated by ZDHHC9 at Cys-296; palmitoylation stabilizes HAVCR2 by preventing binding to E3 ubiquitin ligase SYVN1, thereby suppressing its polyubiquitination and degradation. Ubiquitinated by SYVN1, leading to polyubiquitination and proteasomal degradation. In terms of tissue distribution, expressed in T-helper type 1 (Th1) lymphocytes. Expressed on regulatory T (Treg) cells after TCR stimulation. Expressed in dendritic cells and natural killer (NK) cells. Expressed in epithelial tissues. Expression is increased on CD4+ and CD8+ T-cells in chronic hepatitis C virus (HCV) infection. In progressive HIV-1 infection, expression is up-regulated on HIV-1-specific CD8 T-cells.

The protein localises to the cell membrane. It localises to the cell junction. Its function is as follows. Cell surface receptor implicated in modulating innate and adaptive immune responses. Generally accepted to have an inhibiting function. Reports on stimulating functions suggest that the activity may be influenced by the cellular context and/or the respective ligand. Regulates macrophage activation. Inhibits T-helper type 1 lymphocyte (Th1)-mediated auto- and alloimmune responses and promotes immunological tolerance. In CD8+ cells attenuates TCR-induced signaling, specifically by blocking NF-kappaB and NFAT promoter activities resulting in the loss of IL-2 secretion. The function may implicate its association with LCK proposed to impair phosphorylation of TCR subunits, and/or LGALS9-dependent recruitment of PTPRC to the immunological synapse. In contrast, shown to activate TCR-induced signaling in T-cells probably implicating ZAP70, LCP2, LCK and FYN. Expressed on Treg cells can inhibit Th17 cell responses. Receptor for LGALS9. Binding to LGALS9 is believed to result in suppression of T-cell responses; the resulting apoptosis of antigen-specific cells may implicate HAVCR2 phosphorylation and disruption of its association with BAG6. Binding to LGALS9 is proposed to be involved in innate immune response to intracellular pathogens. Expressed on Th1 cells interacts with LGALS9 expressed on Mycobacterium tuberculosis-infected macrophages to stimulate antibactericidal activity including IL-1 beta secretion and to restrict intracellular bacterial growth. However, the function as receptor for LGALS9 has been challenged. Also reported to enhance CD8+ T-cell responses to an acute infection such as by Listeria monocytogenes. Receptor for phosphatidylserine (PtSer); PtSer-binding is calcium-dependent. May recognize PtSer on apoptotic cells leading to their phagocytosis. Mediates the engulfment of apoptotic cells by dendritic cells. Expressed on T-cells, promotes conjugation but not engulfment of apoptotic cells. Expressed on dendritic cells (DCs) positively regulates innate immune response and in synergy with Toll-like receptors promotes secretion of TNF-alpha. In tumor-imfiltrating DCs suppresses nucleic acid-mediated innate immune repsonse by interaction with HMGB1 and interfering with nucleic acid-sensing and trafficking of nucleid acids to endosomes. Expressed on natural killer (NK) cells acts as a coreceptor to enhance IFN-gamma production in response to LGALS9. In contrast, shown to suppress NK cell-mediated cytotoxicity. Negatively regulates NK cell function in LPS-induced endotoxic shock. The sequence is that of Hepatitis A virus cellular receptor 2 (HAVCR2) from Homo sapiens (Human).